Reading from the N-terminus, the 365-residue chain is S-adenosylmethionine:tRNA ribosyltransferase-isomerase (365 aa).

The protein belongs to the QueA family. Monomer.

It localises to the cytoplasm. The enzyme catalyses 7-aminomethyl-7-carbaguanosine(34) in tRNA + S-adenosyl-L-methionine = epoxyqueuosine(34) in tRNA + adenine + L-methionine + 2 H(+). The protein operates within tRNA modification; tRNA-queuosine biosynthesis. In terms of biological role, transfers and isomerizes the ribose moiety from AdoMet to the 7-aminomethyl group of 7-deazaguanine (preQ1-tRNA) to give epoxyqueuosine (oQ-tRNA). This Rickettsia conorii (strain ATCC VR-613 / Malish 7) protein is S-adenosylmethionine:tRNA ribosyltransferase-isomerase.